Consider the following 347-residue polypeptide: Putative coenzyme F420-dependent oxidoreductase Rv3520c (347 aa).

This chain is Putative coenzyme F420-dependent oxidoreductase Rv3520c, found in Mycobacterium tuberculosis (strain ATCC 25618 / H37Rv).